Consider the following 154-residue polypeptide: MGLSDGEWQLVLNAWGKVETDIGGHGQEVLIRLFKGHPETLEKFDKFKHLKSEDEMKASEDLKKHGTTVLTALGNILKKKGQHEAELAPLAQSHATKHKIPVKYLEFISEAIIQVLESKHPGDFGADAQGAMSKALELFRNDIAAKYKELGFQG.

The 147-residue stretch at 2-148 (GLSDGEWQLV…FRNDIAAKYK (147 aa)) folds into the Globin domain. Serine 4 is modified (phosphoserine). Nitrite is bound at residue histidine 65. Histidine 65 provides a ligand contact to O2. Threonine 68 carries the post-translational modification Phosphothreonine. Histidine 94 contacts heme b.

It belongs to the globin family. As to quaternary structure, monomeric.

It localises to the cytoplasm. The protein resides in the sarcoplasm. The catalysed reaction is Fe(III)-heme b-[protein] + nitric oxide + H2O = Fe(II)-heme b-[protein] + nitrite + 2 H(+). The enzyme catalyses H2O2 + AH2 = A + 2 H2O. Its function is as follows. Monomeric heme protein which primary function is to store oxygen and facilitate its diffusion within muscle tissues. Reversibly binds oxygen through a pentacoordinated heme iron and enables its timely and efficient release as needed during periods of heightened demand. Depending on the oxidative conditions of tissues and cells, and in addition to its ability to bind oxygen, it also has a nitrite reductase activity whereby it regulates the production of bioactive nitric oxide. Under stress conditions, like hypoxia and anoxia, it also protects cells against reactive oxygen species thanks to its pseudoperoxidase activity. This is Myoglobin (MB) from Ctenodactylus gundi (Northern gundi).